Reading from the N-terminus, the 762-residue chain is MGNGSVKPKHAKHPDGHSGNLSNEALRSKVLELERELRRKDAELQEREYHLKELREQLAKQTVAIAELTEELQSKCIQLNKLQDVIHVQGGSPLQASPDKVPLDVHRKTSGLVSLHSRRGAKAGVSAEPTTRTYDLNKPPEFSFEKARVRKDSSEKKLITDALNKNQFLKRLDPQQIKDMVECMYGEKLSTGSYVIKQGEPGNHIFVLAEGRLEVFQGEKLLSSIPMWTTFGELAILYNCTRTASVKAITNVKTWALDREVFQNIMRRTAQARDEEYRNFLRSVSLLKNLPEDKLTKIIDCLEVEYYDKGDYIIREGEEGSTFFILAKGKVKVTQSTEGHDQPQLIKTLQKGEYFGEKALISDDVRSANIIAEENDVACLVIDRETFNQTVGTFDELQKYLEGYVATLNRDDEKRHAKRSMSSWKLSKALSLEMIQLKEKVARFSSTSPFQNLEIIATLGVGGFGRVELVKVKNENVAFAMKCIRKKHIVDTKQQEHVYSEKRILEELCSPFIVKLYRTFKDNKYVYMLLEACLGGELWSILRDRGSFDEPTSKFCVACVTEAFDYLHLLGIIYRDLKPENLILDADGYLKLVDFGFAKKIGSGQKTWTFCGTPEYVAPEVILNKGHDFSVDFWSLGILVYELLTGNPPFSGIDQMMTYNLILKGIEKMDFPRKITRRPEDLIRRLCRQNPTERLGNLKNGINDIKKHRWLNGFNWEGLKARSLPSPLRRELSGPIDHSYFDKYPPEKGVPPDEMSGWDKDF.

The segment at Met1–Leu26 is disordered. Gly2 is lipidated: N-myristoyl glycine. A phosphoserine mark is found at Ser110 and Ser117. A disordered region spans residues Arg118–Lys138. Residues Phe168 to Ser283 are cGMP-binding, high affinity; cAMP-binding, moderate affinity. 3',5'-cyclic GMP-binding positions include Gly232–Ala235, Arg242–Thr243, Lys347, Gly356–Ala359, Arg366–Ser367, Asp412, and Arg415. The interval Leu286–His416 is cGMP-binding, high affinity; cAMP-binding, low affinity. Residue Ser431 is modified to Phosphoserine. In terms of domain architecture, Protein kinase spans Leu453 to Leu711. ATP-binding positions include Leu459–Val467 and Lys482. Asp576 acts as the Proton acceptor in catalysis. Phosphothreonine is present on Thr609. The region spanning Asn712 to Phe762 is the AGC-kinase C-terminal domain. A disordered region spans residues Tyr740–Phe762.

Belongs to the protein kinase superfamily. AGC Ser/Thr protein kinase family. cGMP subfamily. In terms of assembly, interacts with GRIA1/GLUR1. Myristoylation mediates membrane localization.

It localises to the apical cell membrane. The protein localises to the cell membrane. It carries out the reaction L-seryl-[protein] + ATP = O-phospho-L-seryl-[protein] + ADP + H(+). The catalysed reaction is L-threonyl-[protein] + ATP = O-phospho-L-threonyl-[protein] + ADP + H(+). With respect to regulation, binding of cGMP results in enzyme activation. Its function is as follows. Crucial regulator of intestinal secretion and bone growth. Phosphorylates and activates CFTR on the plasma membrane. Plays a key role in intestinal secretion by regulating cGMP-dependent translocation of CFTR in jejunum. Acts downstream of NMDAR to activate the plasma membrane accumulation of GRIA1/GLUR1 in synapse and increase synaptic plasticity. Phosphorylates GRIA1/GLUR1 at Ser-863. Acts as a regulator of gene expression and activator of the extracellular signal-regulated kinases MAPK3/ERK1 and MAPK1/ERK2 in mechanically stimulated osteoblasts. Under fluid shear stress, mediates ERK activation and subsequent induction of FOS, FOSL1/FRA1, FOSL2/FRA2 and FOSB that play a key role in the osteoblast anabolic response to mechanical stimulation. In Mus musculus (Mouse), this protein is cGMP-dependent protein kinase 2 (Prkg2).